The primary structure comprises 367 residues: Chorismate synthase (367 aa).

The tract at residues 41-60 (FTHDLQRRASGKSRHTSARR) is disordered. NADP(+) contacts are provided by R48 and R54. FMN-binding positions include 125–127 (RSS), 238–239 (NA), G278, 293–297 (KPTSS), and R319.

It belongs to the chorismate synthase family. As to quaternary structure, homotetramer. FMNH2 is required as a cofactor.

It catalyses the reaction 5-O-(1-carboxyvinyl)-3-phosphoshikimate = chorismate + phosphate. Its pathway is metabolic intermediate biosynthesis; chorismate biosynthesis; chorismate from D-erythrose 4-phosphate and phosphoenolpyruvate: step 7/7. In terms of biological role, catalyzes the anti-1,4-elimination of the C-3 phosphate and the C-6 proR hydrogen from 5-enolpyruvylshikimate-3-phosphate (EPSP) to yield chorismate, which is the branch point compound that serves as the starting substrate for the three terminal pathways of aromatic amino acid biosynthesis. This reaction introduces a second double bond into the aromatic ring system. This Xanthomonas euvesicatoria pv. vesicatoria (strain 85-10) (Xanthomonas campestris pv. vesicatoria) protein is Chorismate synthase.